A 478-amino-acid polypeptide reads, in one-letter code: UBP1-associated protein 2A (478 aa).

Positions 1–99 (MTKKRKLEGE…NQEDDDDEPI (99 aa)) are disordered. Residues 41–75 (GDVEEVEYEEVEEEQEEEVEDDDDEDDGDENEDQT) show a composition bias toward acidic residues. RRM domains follow at residues 140-217 (RKIF…LASK) and 245-328 (KKIY…KPGK). Disordered regions lie at residues 321–359 (IDGPKPGKQQQHHHNPHAYNNPRYQRNDNNGYGPPGGHG) and 442–478 (GTQPGLQGGYQTPQPGQGGTSRGQHGVGPYGTPYMGH). The span at 442–456 (GTQPGLQGGYQTPQP) shows a compositional bias: low complexity. A compositionally biased stretch (gly residues) spans 457–470 (GQGGTSRGQHGVGP).

As to quaternary structure, interacts with UBA1A, UBA2A, UBP1A, UBP1B, UBP1C and SRK2E. Expressed in young leaves, flowers and embryos.

Its subcellular location is the nucleus. Functionally, heterogeneous nuclear ribonucleoprotein (hnRNP)-like protein that acts as a component of a complex regulating the turnover of mRNAs in the nucleus. Binds with high affinity to RNA molecules that contain U-rich sequences in 3'-UTRs. May function in complex with UBP1 and contribute to the stabilization of mRNAs in the nucleus. However, unlike UBP1, UBA2A does not stimulate pre-mRNA splicing. This Arabidopsis thaliana (Mouse-ear cress) protein is UBP1-associated protein 2A (UBA2A).